We begin with the raw amino-acid sequence, 181 residues long: Ribosome-recycling factor (181 aa).

The tract at residues 135-160 (MDDIKKDKDMPEDDARKAEDQTQKLT) is disordered.

This sequence belongs to the RRF family.

The protein resides in the cytoplasm. Functionally, responsible for the release of ribosomes from messenger RNA at the termination of protein biosynthesis. May increase the efficiency of translation by recycling ribosomes from one round of translation to another. This Leuconostoc mesenteroides subsp. mesenteroides (strain ATCC 8293 / DSM 20343 / BCRC 11652 / CCM 1803 / JCM 6124 / NCDO 523 / NBRC 100496 / NCIMB 8023 / NCTC 12954 / NRRL B-1118 / 37Y) protein is Ribosome-recycling factor.